A 382-amino-acid polypeptide reads, in one-letter code: Homeobox protein SHOOT MERISTEMLESS (382 aa).

The tract at residues 26-59 (MMMMMPPIMTSHQHHGHDHQHQQQEHDGYAYQSH) is disordered. The span at 44-53 (HQHQQQEHDG) shows a compositional bias: basic and acidic residues. Positions 262–282 (ELKGQLLRKYSGYLGSLKQEF) constitute an ELK domain. The homeobox; TALE-type DNA-binding region spans 283-346 (MKKRKKGKLP…NQRKRHWKPS (64 aa)).

This sequence belongs to the TALE/KNOX homeobox family. In terms of assembly, forms homodimers. May form heterodimeric complexes with TALE/BELL proteins BEL1, BLH2, BLH3, BLH8/PNF, BLH9/PNY and ATH1. Interacts with CCT8. Binds to MBP2C; this interaction reduces RNA binding capacity. Interacts with FTIP3 and FTIP4. In terms of tissue distribution, expressed in all four types of shoot apical meristems (SAM) i.e. in vegetative, axillary, inflorescence and floral.

Its subcellular location is the nucleus. The protein localises to the cell junction. It localises to the plasmodesma. The protein resides in the cytoplasm. It is found in the endosome. Its subcellular location is the cell membrane. Functionally, required for shoot apical meristem (SAM) formation during embryogenesis. Negatively regulates ASYMMETRIC LEAVES1 (AS1) and ASYMMETRIC LEAVES2 (AS2 or LBD6). Probably binds to the DNA sequence 5'-TGAC-3'. Binds to RNA. The chain is Homeobox protein SHOOT MERISTEMLESS from Arabidopsis thaliana (Mouse-ear cress).